Consider the following 269-residue polypeptide: Tropinone reductase homolog At2g29320 (269 aa).

19-43 serves as a coordination point for NADP(+); the sequence is LVTGAASGIGYAIVEELAGFGAKIH. Ser152 provides a ligand contact to substrate. The active-site Proton acceptor is Tyr166.

It belongs to the short-chain dehydrogenases/reductases (SDR) family. SDR65C subfamily.

This is Tropinone reductase homolog At2g29320 from Arabidopsis thaliana (Mouse-ear cress).